We begin with the raw amino-acid sequence, 412 residues long: MALIVQKFGGTSVGTVERIEQVAEKVKKFREAGDDVVVVVSAMSGETNRLIGLANQIMEQPVPRELDVMVSTGEQVTIALLSMALIKRGVPAVSYTGNQVRILTDSAHTKARILHIDDTHIRADLKAGRVVVVAGFQGVDGNGNITTLGRGGSDTTGVALAAALKADECQIYTDVDGVYTTDPRVVPQARRLDKITFEEMLEMASLGSKVLQIRAVEFAGKYNVPLRVLHSFQEGPGTLITIDDEEESMEQPIISGIAFNRDEAKLTIRGVPDTPGVAFKILGPISAANVEVDMIVQNVAHDNTTDFTFTVHRNDYLNALEILKQTAANIGAREAIGDTNIAKVSIVGVGMRSHAGVASRMFEALAKESINIQMISTSEIKVSVVIEEKYLELAVRALHTAFELDAPARQGE.

2 ACT domains span residues 266–340 and 346–412; these read LTIR…GDTN and IVGV…RQGE.

This sequence belongs to the aspartokinase family.

The enzyme catalyses L-aspartate + ATP = 4-phospho-L-aspartate + ADP. It participates in amino-acid biosynthesis; L-lysine biosynthesis via DAP pathway; (S)-tetrahydrodipicolinate from L-aspartate: step 1/4. It functions in the pathway amino-acid biosynthesis; L-methionine biosynthesis via de novo pathway; L-homoserine from L-aspartate: step 1/3. Its pathway is amino-acid biosynthesis; L-threonine biosynthesis; L-threonine from L-aspartate: step 1/5. The protein is Aspartokinase (lysC) of Pseudomonas aeruginosa (strain ATCC 15692 / DSM 22644 / CIP 104116 / JCM 14847 / LMG 12228 / 1C / PRS 101 / PAO1).